Consider the following 45-residue polypeptide: Keratin-associated protein 22-2 (45 aa).

Belongs to the KRTAP type 20 family. Interacts with hair keratins.

Its function is as follows. In the hair cortex, hair keratin intermediate filaments are embedded in an interfilamentous matrix, consisting of hair keratin-associated proteins (KRTAP), which are essential for the formation of a rigid and resistant hair shaft through their extensive disulfide bond cross-linking with abundant cysteine residues of hair keratins. The matrix proteins include the high-sulfur and high-glycine-tyrosine keratins. This chain is Keratin-associated protein 22-2 (KRTAP22-2), found in Homo sapiens (Human).